Reading from the N-terminus, the 229-residue chain is Cytidylate kinase (229 aa).

ATP is bound at residue 10–18; the sequence is GHSSSGKST.

It belongs to the cytidylate kinase family. Type 1 subfamily.

Its subcellular location is the cytoplasm. The catalysed reaction is CMP + ATP = CDP + ADP. It catalyses the reaction dCMP + ATP = dCDP + ADP. This Parabacteroides distasonis (strain ATCC 8503 / DSM 20701 / CIP 104284 / JCM 5825 / NCTC 11152) protein is Cytidylate kinase.